The sequence spans 247 residues: Peroxisomal membrane protein 11A (247 aa).

Residues 1-83 (MDAFTRFTNQ…SIHATDLVPR (83 aa)) are Cytoplasmic-facing. The helical transmembrane segment at 84–105 (LCLTLANLNRVIYFICDTILWV) threads the bilayer. The Lumenal segment spans residues 106–219 (RSVGLTSGIN…DQLGIYKSNP (114 aa)). The helical transmembrane segment at 220–239 (GIIGLGGLVSSIAGMITVAY) threads the bilayer. The interval 220 to 239 (GIIGLGGLVSSIAGMITVAY) is required for homodimerization, interaction with PEX11G, and peroxisomal localization. Residues 240 to 247 (PQMKLKTR) are Cytoplasmic-facing.

The protein belongs to the peroxin-11 family. As to quaternary structure, homodimer. Heterodimer with PEX11G. Probably interacts with COPB2 and COPA. Interacts with PEX19. Interacts with FIS1. Post-translationally, seems not to be N-glycosylated.

It is found in the peroxisome membrane. In terms of biological role, may be involved in peroxisomal proliferation and may regulate peroxisomes division. May mediate binding of coatomer proteins to the peroxisomal membrane. Promotes membrane protrusion and elongation on the peroxisomal surface. This chain is Peroxisomal membrane protein 11A (PEX11A), found in Homo sapiens (Human).